A 163-amino-acid polypeptide reads, in one-letter code: Crossover junction endodeoxyribonuclease RuvC (163 aa).

Residues D7, E67, and D140 contribute to the active site. Mg(2+) contacts are provided by D7, E67, and D140.

Belongs to the RuvC family. Homodimer which binds Holliday junction (HJ) DNA. The HJ becomes 2-fold symmetrical on binding to RuvC with unstacked arms; it has a different conformation from HJ DNA in complex with RuvA. In the full resolvosome a probable DNA-RuvA(4)-RuvB(12)-RuvC(2) complex forms which resolves the HJ. The cofactor is Mg(2+).

It localises to the cytoplasm. The enzyme catalyses Endonucleolytic cleavage at a junction such as a reciprocal single-stranded crossover between two homologous DNA duplexes (Holliday junction).. In terms of biological role, the RuvA-RuvB-RuvC complex processes Holliday junction (HJ) DNA during genetic recombination and DNA repair. Endonuclease that resolves HJ intermediates. Cleaves cruciform DNA by making single-stranded nicks across the HJ at symmetrical positions within the homologous arms, yielding a 5'-phosphate and a 3'-hydroxyl group; requires a central core of homology in the junction. The consensus cleavage sequence is 5'-(A/T)TT(C/G)-3'. Cleavage occurs on the 3'-side of the TT dinucleotide at the point of strand exchange. HJ branch migration catalyzed by RuvA-RuvB allows RuvC to scan DNA until it finds its consensus sequence, where it cleaves and resolves the cruciform DNA. This is Crossover junction endodeoxyribonuclease RuvC from Desulforamulus reducens (strain ATCC BAA-1160 / DSM 100696 / MI-1) (Desulfotomaculum reducens).